The sequence spans 284 residues: Transcription factor lir-3 (284 aa).

Residues 50-60 show a composition bias toward basic and acidic residues; sequence EPRISRDELRE. The tract at residues 50 to 71 is disordered; that stretch reads EPRISRDELRETASSPVTFETR. Residues 224–247 form a C2H2-type zinc finger; the sequence is YKCKQCDYLDYRKSTMRKHTVSQH.

In terms of tissue distribution, expressed in FLP neurons.

It is found in the nucleus. In terms of biological role, positively regulates the RNA polymerase III-associated transcription of small non-coding RNAs. This Caenorhabditis elegans protein is Transcription factor lir-3.